A 464-amino-acid chain; its full sequence is Argininosuccinate lyase (464 aa).

It belongs to the lyase 1 family. Argininosuccinate lyase subfamily.

It localises to the cytoplasm. The enzyme catalyses 2-(N(omega)-L-arginino)succinate = fumarate + L-arginine. It functions in the pathway amino-acid biosynthesis; L-arginine biosynthesis; L-arginine from L-ornithine and carbamoyl phosphate: step 3/3. The chain is Argininosuccinate lyase from Pseudomonas aeruginosa (strain UCBPP-PA14).